The sequence spans 233 residues: Large ribosomal subunit protein uL1 (233 aa).

Belongs to the universal ribosomal protein uL1 family. In terms of assembly, part of the 50S ribosomal subunit.

Binds directly to 23S rRNA. The L1 stalk is quite mobile in the ribosome, and is involved in E site tRNA release. Its function is as follows. Protein L1 is also a translational repressor protein, it controls the translation of the L11 operon by binding to its mRNA. In Parvibaculum lavamentivorans (strain DS-1 / DSM 13023 / NCIMB 13966), this protein is Large ribosomal subunit protein uL1.